A 253-amino-acid chain; its full sequence is Probable transcriptional regulatory protein RBE_0568 (253 aa).

Residues 1–21 (MAGHSKFKNIQHRKGAQDKKR) are disordered.

Belongs to the TACO1 family.

Its subcellular location is the cytoplasm. The chain is Probable transcriptional regulatory protein RBE_0568 from Rickettsia bellii (strain RML369-C).